The primary structure comprises 497 residues: Putative diacyglycerol O-acyltransferase Rv3480c (497 aa).

The active-site Proton acceptor is histidine 143.

It belongs to the long-chain O-acyltransferase family.

The enzyme catalyses an acyl-CoA + a 1,2-diacyl-sn-glycerol = a triacyl-sn-glycerol + CoA. It catalyses the reaction di-(9Z)-octadecenoylglycerol + (9Z)-octadecenoyl-CoA = 1,2,3-tri-(9Z-octadecenoyl)-glycerol + CoA. The catalysed reaction is hexadecan-1-ol + hexadecanoyl-CoA = hexadecanyl hexadecanoate + CoA. The protein operates within glycerolipid metabolism; triacylglycerol biosynthesis. Its function is as follows. Upon expression in E.coli has a weak triacylglycerol synthase function, making triacylglycerol (TG) from diolein and long-chain fatty acyl-CoA. Also functions weakly as a wax synthase, as it incorporates palmityl alcohol into wax esters in the presence of palmitoyl-CoA. In Mycobacterium tuberculosis (strain ATCC 25618 / H37Rv), this protein is Putative diacyglycerol O-acyltransferase Rv3480c.